The sequence spans 352 residues: MDYQVSSPTYDIDYYTSEPCQKVNVKQIAARLLPPLYSLVFIFGFVGNILVVLILINCKRLKSMTDIYLLNLAISDLFFLLTVPFWAHYAAAQWDFGNTMCQLLTGLYFIGFFSGIFFIILLTIDRYLAIVHAVFALKARTVTFGVVTSVITWVVAVFASLPGIIFTRSQREGLHYTCSSHFPYSQYQFWKNFQTLKIVILGLVLPLLIMVICYSGILKTLLRCRNEKKRHRAVRLIFTIMIVYFLFWAPYNIVLLLNTFQEFFGLNNCSSSNRLDQAMQVTETLGMTHCCINPIIYAFVGEKFRNYLLVFFQKHIAKRFCKCCSIFQQEAPERASSVYTRSTGEHEISVGL.

Residues 1–30 are Extracellular-facing; the sequence is MDYQVSSPTYDIDYYTSEPCQKVNVKQIAA. Sulfotyrosine is present on tyrosine 3. 2 O-linked (GalNAc...) serine glycosylation sites follow: serine 6 and serine 7. Residues tyrosine 10, tyrosine 14, and tyrosine 15 each carry the sulfotyrosine modification. Disulfide bonds link cysteine 20-cysteine 269 and cysteine 101-cysteine 178. The helical transmembrane segment at 31–58 threads the bilayer; sequence RLLPPLYSLVFIFGFVGNILVVLILINC. At 59 to 68 the chain is on the cytoplasmic side; it reads KRLKSMTDIY. The chain crosses the membrane as a helical span at residues 69–89; sequence LLNLAISDLFFLLTVPFWAHY. Topologically, residues 90 to 102 are extracellular; it reads AAAQWDFGNTMCQ. The chain crosses the membrane as a helical span at residues 103 to 124; the sequence is LLTGLYFIGFFSGIFFIILLTI. The Cytoplasmic portion of the chain corresponds to 125–141; it reads DRYLAIVHAVFALKART. A helical transmembrane segment spans residues 142–166; it reads VTFGVVTSVITWVVAVFASLPGIIF. At 167-198 the chain is on the extracellular side; it reads TRSQREGLHYTCSSHFPYSQYQFWKNFQTLKI. Residues 199-218 form a helical membrane-spanning segment; the sequence is VILGLVLPLLIMVICYSGIL. The Cytoplasmic segment spans residues 219–235; the sequence is KTLLRCRNEKKRHRAVR. Residues 236–260 traverse the membrane as a helical segment; the sequence is LIFTIMIVYFLFWAPYNIVLLLNTF. Over 261-277 the chain is Extracellular; that stretch reads QEFFGLNNCSSSNRLDQ. The chain crosses the membrane as a helical span at residues 278-301; the sequence is AMQVTETLGMTHCCINPIIYAFVG. Residues 302–352 lie on the Cytoplasmic side of the membrane; sequence EKFRNYLLVFFQKHIAKRFCKCCSIFQQEAPERASSVYTRSTGEHEISVGL. Residues cysteine 321, cysteine 323, and cysteine 324 are each lipidated (S-palmitoyl cysteine). Serine 336, serine 337, serine 342, and serine 349 each carry phosphoserine; by BARK1.

This sequence belongs to the G-protein coupled receptor 1 family. Interacts with PRAF2. Efficient ligand binding to CCL3/MIP-1alpha and CCL4/MIP-1beta requires sulfation, O-glycosylation and sialic acid modifications. Glycosylation on Ser-6 is required for efficient binding of CCL4. Interacts with GRK2. Interacts with ARRB1 and ARRB2. Interacts with CNIH4. Interacts with S100A4; this interaction stimulates T-lymphocyte chemotaxis. Post-translationally, sulfated on at least 2 of the N-terminal tyrosines. Sulfation is required for efficient binding of the chemokines, CCL3 and CCL4. In terms of processing, palmitoylation in the C-terminal is important for cell surface expression. Phosphorylation on serine residues in the C-terminal is stimulated by binding CC chemokines especially by APO-RANTES. Post-translationally, O-glycosylated, but not N-glycosylated. Ser-6 appears to be the major site even if Ser-7 may be also O-glycosylated. Also sialylated glycans present which contribute to chemokine binding. Thr-16 and Ser-17 may also be glycosylated and, if so, with small moieties such as a T-antigen.

It is found in the cell membrane. In terms of biological role, receptor for a number of inflammatory CC-chemokines including CCL3/MIP-1-alpha, CCL4/MIP-1-beta and RANTES and subsequently transduces a signal by increasing the intracellular calcium ion level. May play a role in the control of granulocytic lineage proliferation or differentiation. Participates in T-lymphocyte migration to the infection site by acting as a chemotactic receptor. In Pygathrix nemaeus (Red-shanked douc langur), this protein is C-C chemokine receptor type 5 (CCR5).